A 251-amino-acid chain; its full sequence is uncharacterized protein (251 aa).

Residue 10 to 34 participates in NADP(+) binding; the sequence is ITGAGSGIGKKAAVMFAERGAKVAI. A substrate-binding site is contributed by Ser139. The active-site Proton acceptor is Tyr152.

It belongs to the short-chain dehydrogenases/reductases (SDR) family.

This is an uncharacterized protein from Thermotoga maritima (strain ATCC 43589 / DSM 3109 / JCM 10099 / NBRC 100826 / MSB8).